A 267-amino-acid chain; its full sequence is Octanoyltransferase (267 aa).

Residues 1–30 (MPTGKLRQKPPYAAIMTNSPVTPSTETQQP) form a disordered region. Residues 16-28 (MTNSPVTPSTETQ) are compositionally biased toward polar residues. Positions 77 to 265 (GTASELVWLV…AFESVFGPRQ (189 aa)) constitute a BPL/LPL catalytic domain. Residues 116–123 (RGGEYTYH), 196–198 (AIG), and 209–211 (GIA) contribute to the substrate site. Cysteine 227 acts as the Acyl-thioester intermediate in catalysis.

It belongs to the LipB family.

The protein resides in the cytoplasm. The enzyme catalyses octanoyl-[ACP] + L-lysyl-[protein] = N(6)-octanoyl-L-lysyl-[protein] + holo-[ACP] + H(+). It participates in protein modification; protein lipoylation via endogenous pathway; protein N(6)-(lipoyl)lysine from octanoyl-[acyl-carrier-protein]: step 1/2. Its function is as follows. Catalyzes the transfer of endogenously produced octanoic acid from octanoyl-acyl-carrier-protein onto the lipoyl domains of lipoate-dependent enzymes. Lipoyl-ACP can also act as a substrate although octanoyl-ACP is likely to be the physiological substrate. In Brucella abortus biovar 1 (strain 9-941), this protein is Octanoyltransferase.